The following is a 61-amino-acid chain: Small ribosomal subunit protein uS14 (61 aa).

The span at 1-14 shows a compositional bias: basic residues; that stretch reads MAKTSQKVRNHRPA. Positions 1–20 are disordered; sequence MAKTSQKVRNHRPAKFSSRE. The Zn(2+) site is built by Cys24, Cys27, Cys40, and Cys43.

This sequence belongs to the universal ribosomal protein uS14 family. Zinc-binding uS14 subfamily. In terms of assembly, part of the 30S ribosomal subunit. Contacts proteins S3 and S10. It depends on Zn(2+) as a cofactor.

In terms of biological role, binds 16S rRNA, required for the assembly of 30S particles and may also be responsible for determining the conformation of the 16S rRNA at the A site. The sequence is that of Small ribosomal subunit protein uS14 from Lactobacillus delbrueckii subsp. bulgaricus (strain ATCC 11842 / DSM 20081 / BCRC 10696 / JCM 1002 / NBRC 13953 / NCIMB 11778 / NCTC 12712 / WDCM 00102 / Lb 14).